The following is a 314-amino-acid chain: Solute carrier family 25 member 44 (314 aa).

3 Solcar repeats span residues 18–100, 107–210, and 220–302; these read KKFY…TRKF, SNTV…YAEQ, and PHIV…LKKL. A run of 6 helical transmembrane segments spans residues 20 to 42, 71 to 90, 113 to 133, 185 to 201, 222 to 239, and 278 to 296; these read FYVF…TLIR, AGLY…GQCY, LVAG…IDVV, GYVA…AVWW, IVFQ…ASIL, and LSAR…VVGY.

Belongs to the mitochondrial carrier (TC 2.A.29) family. As to expression, highly expressed in brown adipose tissues compared with other metabolic organs.

It is found in the mitochondrion membrane. It carries out the reaction L-valine(in) = L-valine(out). The enzyme catalyses L-leucine(in) = L-leucine(out). In terms of biological role, mitochondrial solute transporter which transports branched-chain amino acid (BCAA; valine, leucine and isoleucine) into mitochondria in brown adipose tissue (BAT). BAT is involved in BCAA catabolism and actively utilizes BCAA in the mitochondria for thermogenesis. The sequence is that of Solute carrier family 25 member 44 from Mus musculus (Mouse).